The chain runs to 207 residues: Outer-membrane lipoprotein carrier protein (207 aa).

Positions 1 to 21 (MRLIRMLLLPVLAVTTLSAHA) are cleaved as a signal peptide.

The protein belongs to the LolA family. In terms of assembly, monomer.

Its subcellular location is the periplasm. Its function is as follows. Participates in the translocation of lipoproteins from the inner membrane to the outer membrane. Only forms a complex with a lipoprotein if the residue after the N-terminal Cys is not an aspartate (The Asp acts as a targeting signal to indicate that the lipoprotein should stay in the inner membrane). This Pseudomonas fluorescens (strain ATCC BAA-477 / NRRL B-23932 / Pf-5) protein is Outer-membrane lipoprotein carrier protein.